Reading from the N-terminus, the 378-residue chain is Cytochrome b (378 aa).

Transmembrane regions (helical) follow at residues 34-54 (FGSL…FLAM), 78-99 (WLLR…YLHV), 114-134 (WLIG…GYVL), and 179-199 (FFTF…IHLL). H84 and H98 together coordinate heme b. Residues H183 and H197 each contribute to the heme b site. Residue H202 coordinates a ubiquinone. 4 consecutive transmembrane segments (helical) span residues 227–247 (FKDI…VLIS), 289–309 (LGGV…PFYN), 321–341 (INQV…WIGA), and 348–368 (YVLI…VNPL).

This sequence belongs to the cytochrome b family. In terms of assembly, the main subunits of complex b-c1 are: cytochrome b, cytochrome c1 and the Rieske protein. It depends on heme b as a cofactor.

It localises to the mitochondrion inner membrane. Functionally, component of the ubiquinol-cytochrome c reductase complex (complex III or cytochrome b-c1 complex) that is part of the mitochondrial respiratory chain. The b-c1 complex mediates electron transfer from ubiquinol to cytochrome c. Contributes to the generation of a proton gradient across the mitochondrial membrane that is then used for ATP synthesis. The sequence is that of Cytochrome b (mt:Cyt-b) from Drosophila melanogaster (Fruit fly).